A 460-amino-acid chain; its full sequence is DNA repair protein RAD57 (460 aa).

An ATP-binding site is contributed by 125–132; it reads GESSTGKS.

The protein belongs to the RecA family.

The protein resides in the nucleus. Its function is as follows. Participates in the repair of X-ray-induced damage to DNA and in meiosis. It may act in part by stabilizing a repair complex of other RAD genes. The protein is DNA repair protein RAD57 (RAD57) of Saccharomyces cerevisiae (strain ATCC 204508 / S288c) (Baker's yeast).